The chain runs to 236 residues: Phosphoribosylaminoimidazole-succinocarboxamide synthase (236 aa).

It belongs to the SAICAR synthetase family.

The enzyme catalyses 5-amino-1-(5-phospho-D-ribosyl)imidazole-4-carboxylate + L-aspartate + ATP = (2S)-2-[5-amino-1-(5-phospho-beta-D-ribosyl)imidazole-4-carboxamido]succinate + ADP + phosphate + 2 H(+). It functions in the pathway purine metabolism; IMP biosynthesis via de novo pathway; 5-amino-1-(5-phospho-D-ribosyl)imidazole-4-carboxamide from 5-amino-1-(5-phospho-D-ribosyl)imidazole-4-carboxylate: step 1/2. The sequence is that of Phosphoribosylaminoimidazole-succinocarboxamide synthase from Pseudomonas paraeruginosa (strain DSM 24068 / PA7) (Pseudomonas aeruginosa (strain PA7)).